A 1385-amino-acid chain; its full sequence is PsbD mRNA maturation factor Nac2, chloroplastic (1385 aa).

The transit peptide at Met-1–Ala-45 directs the protein to the chloroplast. Low complexity predominate over residues Gly-132–Pro-152. 7 disordered regions span residues Gly-132–Arg-157, Ala-263–Ala-282, Thr-304–Pro-360, Arg-387–Gln-502, Asn-546–Ser-568, His-726–Ala-756, and Ala-840–Ala-899. Residues Gln-271–Ser-281 show a composition bias toward basic and acidic residues. Residues Thr-304 to Ser-313 are compositionally biased toward low complexity. Residues Asn-403–Gly-412 are compositionally biased toward gly residues. 4 stretches are compositionally biased toward low complexity: residues Ala-448–Ala-464, Ala-554–Ser-568, Ser-729–Gly-744, and Ala-854–Gly-893. 9 TPR repeats span residues Arg-851 to Ser-884, Gly-951 to Asp-984, Val-985 to Asp-1018, Lys-1019 to Asn-1052, Thr-1053 to Ser-1086, Val-1091 to Ser-1124, Ala-1125 to Phe-1158, Ala-1160 to Asn-1193, and Ala-1205 to Val-1238. Disordered stretches follow at residues Ala-1237–Pro-1257 and Ile-1333–Met-1385. Residues Gln-1356–Glu-1365 show a composition bias toward acidic residues. Residues Ala-1374–Met-1385 show a composition bias toward basic and acidic residues.

As to quaternary structure, part of 2 complexes of about 600 and less than 2000 kDa, both of which also contain non-polysomal RNA.

The protein localises to the plastid. The protein resides in the chloroplast stroma. In terms of biological role, involved, directly or indirectly, in the processing of the chloroplast encoded psbD mRNA to its mature form, acting via the 5'-UTR of the psbD mRNA. The last 588 amino acids of the protein are sufficient to confer stability on the transcript in vivo. The chain is PsbD mRNA maturation factor Nac2, chloroplastic (NAC2) from Chlamydomonas reinhardtii (Chlamydomonas smithii).